We begin with the raw amino-acid sequence, 471 residues long: Cell division protein FtsP (471 aa).

The tat-type signal signal peptide spans 1 to 27; it reads MSLNRRQFIQASGLALCAGMTPLAAKA. The Plastocyanin-like domain maps to 229–287; sequence VRLRLLNASNSRRYVMRLSDGRAMNVIASDQGLLPAPMAVNQLSLAPGERREILIDMSQ.

Belongs to the FtsP family. Predicted to be exported by the Tat system. The position of the signal peptide cleavage has not been experimentally proven.

The protein resides in the periplasm. Cell division protein that is required for growth during stress conditions. May be involved in protecting or stabilizing the divisomal assembly under conditions of stress. The protein is Cell division protein FtsP of Pectobacterium atrosepticum (strain SCRI 1043 / ATCC BAA-672) (Erwinia carotovora subsp. atroseptica).